The sequence spans 526 residues: Nuclear pore glycoprotein p62 (526 aa).

The residue at position 2 (serine 2) is an N-acetylserine. 4 consecutive repeat copies span residues 6–7 (FG), 46–47 (FG), 78–79 (FG), and 115–116 (FG). Positions 6-144 (FGGTGAPAGG…GTAPTGFVFG (139 aa)) are 5 X 2 AA repeats of F-G. Positions 43 to 82 (GFNFGTPSQPAATTPSTSLFSLTTQTPTTQTPGFNFGTTP) are disordered. Low complexity predominate over residues 46-81 (FGTPSQPAATTPSTSLFSLTTQTPTTQTPGFNFGTT). Polar residues predominate over residues 128-137 (SGSTSNQGTA). The tract at residues 128 to 148 (SGSTSNQGTAPTGFVFGSSTT) is disordered. Residues 143–144 (FG) form repeat 5. Residues 332 to 462 (MTYAQLESLI…QDLKDIIEHL (131 aa)) form a required for centrosome localization region. Positions 332 to 462 (MTYAQLESLI…QDLKDIIEHL (131 aa)) form a coiled coil. Threonine 377 carries an O-linked (GlcNAc) threonine glycan. Phosphoserine is present on residues serine 412 and serine 422. An O-linked (GlcNAc) serine glycan is attached at serine 472.

It belongs to the nucleoporin NSP1/NUP62 family. Component of the p62 complex, a complex at least composed of NUP62, NUP54, and NUP58. Interacts with NUP88. Interacts with NUTF2. Interacts with HIKESHI. Interacts with OSBPL8. Interacts with CAPG. Interacts with SAS6 and TUBG1 at the centrosome. Interacts with MCM3AP. Post-translationally, O-glycosylated. In terms of processing, the inner channel of the NPC has a different redox environment from the cytoplasm and allows the formation of interchain disulfide bonds between some nucleoporins, the significant increase of these linkages upon oxidative stress reduces the permeability of the NPC.

The protein resides in the nucleus. It localises to the nuclear pore complex. The protein localises to the cytoplasm. Its subcellular location is the cytoskeleton. It is found in the spindle pole. The protein resides in the nucleus envelope. It localises to the microtubule organizing center. The protein localises to the centrosome. In terms of biological role, essential component of the nuclear pore complex. The N-terminal is probably involved in nucleocytoplasmic transport. The C-terminal is involved in protein-protein interaction probably via coiled-coil formation, promotes its association with centrosomes and may function in anchorage of p62 to the pore complex. Plays a role in mitotic cell cycle progression by regulating centrosome segregation, centriole maturation and spindle orientation. It might be involved in protein recruitment to the centrosome after nuclear breakdown. This Mus musculus (Mouse) protein is Nuclear pore glycoprotein p62 (Nup62).